The chain runs to 236 residues: Urease accessory protein UreF (236 aa).

Belongs to the UreF family. UreD, UreF and UreG form a complex that acts as a GTP-hydrolysis-dependent molecular chaperone, activating the urease apoprotein by helping to assemble the nickel containing metallocenter of UreC. The UreE protein probably delivers the nickel.

Its subcellular location is the cytoplasm. Functionally, required for maturation of urease via the functional incorporation of the urease nickel metallocenter. The polypeptide is Urease accessory protein UreF (Synechocystis sp. (strain ATCC 27184 / PCC 6803 / Kazusa)).